Reading from the N-terminus, the 335-residue chain is Galactosylgalactosylxylosylprotein 3-beta-glucuronosyltransferase 1 (335 aa).

Residues 1–6 (MPKRRD) lie on the Cytoplasmic side of the membrane. Positions 3–5 (KRR) are essential for transport from endoplasmic reticulum to Golgi apparatus and interaction with SAR1A. The chain crosses the membrane as a helical; Signal-anchor for type II membrane protein span at residues 7 to 27 (ILAIVLIVLPWTLLVTVWHQS). Topologically, residues 28-335 (TIAPLLTTHK…KGFTDPTVEI (308 aa)) are lumenal. Residue 92–94 (PTY) participates in UDP-alpha-D-glucuronate binding. Phosphothreonine occurs at positions 104 and 109. Position 123 (D123) interacts with UDP-alpha-D-glucuronate. N141 carries N-linked (GlcNAc...) asparagine glycosylation. Residues R166 and R171 each coordinate UDP-alpha-D-glucuronate. The N-linked (GlcNAc...) asparagine glycan is linked to N185. Residue 196 to 198 (DDD) participates in UDP-alpha-D-glucuronate binding. A Mn(2+)-binding site is contributed by D198. Positions 246 to 255 (FDPHRPFAID) are interaction with galactose moiety of substrate glycoprotein. E285 serves as the catalytic Proton donor/acceptor. N304 carries an N-linked (GlcNAc...) asparagine glycan. 312-314 (HTR) lines the UDP-alpha-D-glucuronate pocket.

This sequence belongs to the glycosyltransferase 43 family. As to quaternary structure, homodimer. Interacts with SAR1A. The cofactor is Mn(2+). In terms of processing, the soluble form derives from the membrane form by proteolytic processing.

The protein resides in the golgi apparatus membrane. It is found in the secreted. The catalysed reaction is 3-O-(beta-D-galactosyl-(1-&gt;3)-beta-D-galactosyl-(1-&gt;4)-beta-D-xylosyl)-L-seryl-[protein] + UDP-alpha-D-glucuronate = 3-O-(beta-D-GlcA-(1-&gt;3)-beta-D-Gal-(1-&gt;3)-beta-D-Gal-(1-&gt;4)-beta-D-Xyl)-L-seryl-[protein] + UDP + H(+). It functions in the pathway protein modification; protein glycosylation. Its function is as follows. Involved in the biosynthesis of L2/HNK-1 carbohydrate epitope on glycoproteins. Can also play a role in glycosaminoglycan biosynthesis. Substrates include asialo-orosomucoid (ASOR), asialo-fetuin, and asialo-neural cell adhesion molecule. Requires sphingomyelin for activity: stearoyl-sphingomyelin was the most effective, followed by palmitoyl-sphingomyelin and lignoceroyl-sphingomyelin. Activity was demonstrated only for sphingomyelin with a saturated fatty acid and not for that with an unsaturated fatty acid, regardless of the length of the acyl group. This chain is Galactosylgalactosylxylosylprotein 3-beta-glucuronosyltransferase 1, found in Canis lupus familiaris (Dog).